A 462-amino-acid chain; its full sequence is MEYLPLFANLRQRTVLVVGGGNVAARKIQLLMRTGAHIKVVADDLCPELARIVNKKDINWIGKLFEPAMLDEVFLVIAATNNTKLNALVYKCAEKRHIFANIVDKQSYCSFIFPSIVDRSPIVVAISSSGKAPVLARILREKIETILPMFIGPMATLVGTWRNRIKQHIHNIAWRRRFWETILNGRFAHLISQGKWEHAEKEIESQLYHYQSPIGNVALVGAGPGDSGLLTLRGLQLMQQADIVLYDYLVSPEILDLVRRDADRIYVGKQAGKHSMPQAEINSLLVKLALQGKNVVRLKGGDPFIFGRGGEELQAVAAAGISFQVVPGITAASGATAYAGIPLTHREYAHSVIFITGHQCDDSSNYLNWSLLARSNQTLVIYMGVIQAAVIKKKLLAHGRALQTPVAVISRGTLKDQSVIIGTLEQLEMLTIQALSPTLLIIGEVVKISCEINWFGKIIKEQ.

A precorrin-2 dehydrogenase /sirohydrochlorin ferrochelatase region spans residues 1–203; that stretch reads MEYLPLFANL…GKWEHAEKEI (203 aa). NAD(+) is bound by residues 22–23 and 43–44; these read NV and DD. The residue at position 128 (Ser128) is a Phosphoserine. The tract at residues 215–462 is uroporphyrinogen-III C-methyltransferase; it reads GNVALVGAGP…NWFGKIIKEQ (248 aa). Pro224 lines the S-adenosyl-L-methionine pocket. The active-site Proton acceptor is the Asp247. Lys269 (proton donor) is an active-site residue. Residues 300 to 302, Ile305, 330 to 331, Met383, and Gly412 each bind S-adenosyl-L-methionine; these read GGD and TA.

It in the N-terminal section; belongs to the precorrin-2 dehydrogenase / sirohydrochlorin ferrochelatase family. The protein in the C-terminal section; belongs to the precorrin methyltransferase family.

The catalysed reaction is uroporphyrinogen III + 2 S-adenosyl-L-methionine = precorrin-2 + 2 S-adenosyl-L-homocysteine + H(+). It carries out the reaction precorrin-2 + NAD(+) = sirohydrochlorin + NADH + 2 H(+). It catalyses the reaction siroheme + 2 H(+) = sirohydrochlorin + Fe(2+). Its pathway is cofactor biosynthesis; adenosylcobalamin biosynthesis; precorrin-2 from uroporphyrinogen III: step 1/1. It functions in the pathway cofactor biosynthesis; adenosylcobalamin biosynthesis; sirohydrochlorin from precorrin-2: step 1/1. The protein operates within porphyrin-containing compound metabolism; siroheme biosynthesis; precorrin-2 from uroporphyrinogen III: step 1/1. It participates in porphyrin-containing compound metabolism; siroheme biosynthesis; siroheme from sirohydrochlorin: step 1/1. Its pathway is porphyrin-containing compound metabolism; siroheme biosynthesis; sirohydrochlorin from precorrin-2: step 1/1. Multifunctional enzyme that catalyzes the SAM-dependent methylations of uroporphyrinogen III at position C-2 and C-7 to form precorrin-2 via precorrin-1. Then it catalyzes the NAD-dependent ring dehydrogenation of precorrin-2 to yield sirohydrochlorin. Finally, it catalyzes the ferrochelation of sirohydrochlorin to yield siroheme. The sequence is that of Siroheme synthase from Baumannia cicadellinicola subsp. Homalodisca coagulata.